The sequence spans 218 residues: Large ribosomal subunit protein uL3 (218 aa).

The protein belongs to the universal ribosomal protein uL3 family. As to quaternary structure, part of the 50S ribosomal subunit. Forms a cluster with proteins L14 and L19.

Its function is as follows. One of the primary rRNA binding proteins, it binds directly near the 3'-end of the 23S rRNA, where it nucleates assembly of the 50S subunit. The protein is Large ribosomal subunit protein uL3 of Corynebacterium efficiens (strain DSM 44549 / YS-314 / AJ 12310 / JCM 11189 / NBRC 100395).